A 203-amino-acid chain; its full sequence is MRLTRDFYAKDARVLAKELLGKVLVREVDGIKLKGKIVETEAYIGAIDKASHAYGGRRTKRTEPLYGKPGIAYVYFIYGKYFCFNIISKTEGEAEGVLIRALEPLENINLISKLRFNKEFEELNNYQRKNITSGPSKLCMAFNINRDNNWEDLCESSSLYVEDVFYNDFEIIETVRVGIDYAEEARDFLWRYYIKDNAFVSVK.

This sequence belongs to the DNA glycosylase MPG family.

This chain is Putative 3-methyladenine DNA glycosylase, found in Clostridium botulinum (strain ATCC 19397 / Type A).